Here is a 567-residue protein sequence, read N- to C-terminus: Potassium-transporting ATPase potassium-binding subunit (567 aa).

A run of 11 helical transmembrane segments spans residues 3-23 (FIGWCQIALFGAVVVALVKPL), 64-84 (LTFTLAMLLFHIGGFAIIYAV), 136-156 (ALTHQNFLSAATGIVLAMALI), 179-199 (LYVLLPICIPYALFLVWQGMP), 254-274 (LSNFVQMLSIFVLGAALTNVF), 285-305 (WAILGVMGVLFVVGIAVAYWA), 330-350 (FGIVASALFAVVTTAASCGAV), 357-376 (FTALGGMIPLINMQLGEIIV), 421-441 (MLAILVLPLMYLGWTAIAVVL), 473-495 (AFGGLTGNTFFYNLTLATAMFVG), and 527-547 (GGLFVGLVVGVILIIGGLTFF).

Belongs to the KdpA family. In terms of assembly, the system is composed of three essential subunits: KdpA, KdpB and KdpC.

It is found in the cell inner membrane. Its function is as follows. Part of the high-affinity ATP-driven potassium transport (or Kdp) system, which catalyzes the hydrolysis of ATP coupled with the electrogenic transport of potassium into the cytoplasm. This subunit binds the periplasmic potassium ions and delivers the ions to the membrane domain of KdpB through an intramembrane tunnel. The sequence is that of Potassium-transporting ATPase potassium-binding subunit from Rhodopseudomonas palustris (strain ATCC BAA-98 / CGA009).